The chain runs to 72 residues: UPF0154 protein lhv_1362 (72 aa).

The helical transmembrane segment at 3-23 (LGLAIFLIIIALLVGAVAGFY) threads the bilayer.

Belongs to the UPF0154 family.

The protein resides in the cell membrane. The sequence is that of UPF0154 protein lhv_1362 from Lactobacillus helveticus (strain DPC 4571).